A 98-amino-acid polypeptide reads, in one-letter code: Citrate lyase acyl carrier protein (98 aa).

The residue at position 14 (S14) is an O-(phosphoribosyl dephospho-coenzyme A)serine.

Belongs to the CitD family. Oligomer with a subunit composition of (alpha,beta,gamma)6.

It localises to the cytoplasm. In terms of biological role, covalent carrier of the coenzyme of citrate lyase. The chain is Citrate lyase acyl carrier protein from Escherichia coli O127:H6 (strain E2348/69 / EPEC).